Reading from the N-terminus, the 249-residue chain is Triosephosphate isomerase (249 aa).

9 to 11 is a binding site for substrate; the sequence is NWK. The active-site Electrophile is the His95. The active-site Proton acceptor is Glu165. Substrate-binding positions include Gly171, Ser210, and 231-232; that span reads GG.

Belongs to the triosephosphate isomerase family. As to quaternary structure, homodimer.

The protein localises to the cytoplasm. It carries out the reaction D-glyceraldehyde 3-phosphate = dihydroxyacetone phosphate. It participates in carbohydrate biosynthesis; gluconeogenesis. Its pathway is carbohydrate degradation; glycolysis; D-glyceraldehyde 3-phosphate from glycerone phosphate: step 1/1. Functionally, involved in the gluconeogenesis. Catalyzes stereospecifically the conversion of dihydroxyacetone phosphate (DHAP) to D-glyceraldehyde-3-phosphate (G3P). This is Triosephosphate isomerase from Hyphomonas neptunium (strain ATCC 15444).